The following is a 1551-amino-acid chain: MSIEKVPILGKETIHVGYGIADHIVREVIANLASSTYVIVTDTNMARTPQYSKLTDDFKTNLSEKRPESRLLTYCVSPGENNKNRATKAAVEDFLLQQGCTRDTVILAVGGGVIGDMIGFVAATFMRGVRVVQVPTTLLAMVDSSVGGKTAIDTPLGKNFIGAFHQPEYVFCDVSFLETLPARQFINGMAEVVKTAAIWNEEEFTRLENFSKKFLSVVTSKKPDLQSIKAELVKTVLESVRVKAGVVSSDEKEAGLRNLLNFGHTIGHAIEAVLTPEALHGECVSIGMIKEAELSRYLGILPPVAVARLSKCLVAYGLPVSIDDKEFLKKVGPKRHYVEIDILLKKMAIDKKNDGSKIRCVLLEKIGKCYQLKAHQVSKQDLSFVLTDEVLVHPFTNPPKENIIVPPGSKSISNRALILAALGNGTVRVKNLLHSDDTKHMLDAVASLKGAEISTEDNGETIVVKGNGGNLVTSGEELYLGNAGTASRFLTTVASLVGKSQASDDVILTGNARMQERPIGPLVDALGSNGSEIEYLNKQGSLPLKISAGNGLKGGRIELAATISSQYVSSILMCAPYAKEPVTLALVGGKPISQLYIDMTCAMMKSFGIEVTKSTTEEYTYHIPKGTYKNPSEYVIESDASSATYPLAFAAMTGTSCTIPNIGSSSLQGDAKFAVDVLKPMGCKVEQTTTSTTVTGPPRGHLKPLPHVDMEPMTDAFLTASVVAAVAKGGSSTSITGIANQRVKECNRIEAMVTELAKFGVPANELPDGIEIHGIDIEDLKTPEISKRGVSSYDDHRVAMSFSLLAGLCKEPVLILERSTTGKTWPGWWDILHSKFKIELDGYEPPFNTDKHVDKSSDKSIIVIGMRGTGKSTLSEWLASFLGFKMLDMDKYLEEKLGTGIKSLIKAKGWEYFRQEEAIVAKECFTKFSKGYVLSTGGGIVEGEDARQQLKSYADNGGIVLHLHRDLDETVTFLAADTTRPAYSSEVQEVWLRREKWYHECSNYHFYSSHCSTEDEFNHLRRSFVNYIKLITGAERPVVPAGRSAAVVLTSPDLNEVVGDLESITIGADAVELRVDLFKDTSAEFVAAQIAVIRKHADLPIIYTVRTVSQGGKFPDENVDELKSLLLLGIRLGVAYVDLQLTAPNELIEEISSKKGFTRVIGTYQDINGELKWNNVEWKNKYNQGVSMNADIVRLVGKANSIQDNLDLENFKKQNTLKPLIAFNLGSQGKLSQVLNGTFTPISHKLLPNDEEFLTIGELNQTYFDIGGFTAKKFWVIGSPIEHSRSPNLHNAGYKALNLPYQFGRFEATDVDVVYDNLINKPDFGGLAITMPLKLDIMKFATKLSDAAETIGAVNTLIPIEGGYFGDNTDWVGISNSFIRAGVPPKSSSNGLVVGAGGTSRAAIYALHQMGCAKIYLVNRTAAKLEELVKSFPKDYNLEIVETEQQADKASKVSLAVSCIPADKPLDGEVLKKIERILSNGSEQSAGFKPTLLEASYKPRVTPIMKLTEEQYKWKVIPGVEMLVNQGDRQFKLHTGFTAPYEIIHRAVVEE.

Residues 1 to 379 (MSIEKVPILG…YQLKAHQVSK (379 aa)) form a 3-dehydroquinate synthase region. NAD(+) is bound by residues 42 to 44 (DTN), 80 to 83 (ENNK), 111 to 113 (GGV), and aspartate 116. Position 127 (arginine 127) interacts with 7-phospho-2-dehydro-3-deoxy-D-arabino-heptonate. 136-137 (TT) serves as a coordination point for NAD(+). Aspartate 143 and lysine 149 together coordinate 7-phospho-2-dehydro-3-deoxy-D-arabino-heptonate. Lysine 158 is an NAD(+) binding site. Asparagine 159 contacts 7-phospho-2-dehydro-3-deoxy-D-arabino-heptonate. NAD(+) is bound by residues 176–179 (FLET) and asparagine 187. Zn(2+) is bound at residue glutamate 191. 7-phospho-2-dehydro-3-deoxy-D-arabino-heptonate contacts are provided by residues 191 to 194 (EVVK) and lysine 243. The active-site Proton acceptor; for 3-dehydroquinate synthase activity is glutamate 253. Residues 257-261 (RNLLN) and histidine 264 contribute to the 7-phospho-2-dehydro-3-deoxy-D-arabino-heptonate site. Histidine 264 contacts Zn(2+). Histidine 268 functions as the Proton acceptor; for 3-dehydroquinate synthase activity in the catalytic mechanism. 7-phospho-2-dehydro-3-deoxy-D-arabino-heptonate-binding residues include histidine 280 and lysine 351. Histidine 280 contributes to the Zn(2+) binding site. The tract at residues 392-838 (VHPFTNPPKE…WDILHSKFKI (447 aa)) is EPSP synthase. The shikimate kinase stretch occupies residues 858-1048 (DKSIIVIGMR…VPAGRSAAVV (191 aa)). 865–872 (GMRGTGKS) contacts ATP. Residues 1049-1258 (LTSPDLNEVV…NDEEFLTIGE (210 aa)) are 3-dehydroquinase. Catalysis depends on arginine 1194, which acts as the Schiff-base intermediate with substrate; for 3-dehydroquinate dehydratase activity. A shikimate dehydrogenase region spans residues 1271 to 1551 (AKKFWVIGSP…EIIHRAVVEE (281 aa)).

In the N-terminal section; belongs to the sugar phosphate cyclases superfamily. Dehydroquinate synthase family. The protein in the 2nd section; belongs to the EPSP synthase family. This sequence in the 3rd section; belongs to the shikimate kinase family. It in the 4th section; belongs to the type-I 3-dehydroquinase family. In the C-terminal section; belongs to the shikimate dehydrogenase family. In terms of assembly, homodimer. The cofactor is Zn(2+).

The protein resides in the cytoplasm. It carries out the reaction 7-phospho-2-dehydro-3-deoxy-D-arabino-heptonate = 3-dehydroquinate + phosphate. The catalysed reaction is 3-dehydroquinate = 3-dehydroshikimate + H2O. The enzyme catalyses shikimate + NADP(+) = 3-dehydroshikimate + NADPH + H(+). It catalyses the reaction shikimate + ATP = 3-phosphoshikimate + ADP + H(+). It carries out the reaction 3-phosphoshikimate + phosphoenolpyruvate = 5-O-(1-carboxyvinyl)-3-phosphoshikimate + phosphate. The protein operates within metabolic intermediate biosynthesis; chorismate biosynthesis; chorismate from D-erythrose 4-phosphate and phosphoenolpyruvate: step 2/7. It functions in the pathway metabolic intermediate biosynthesis; chorismate biosynthesis; chorismate from D-erythrose 4-phosphate and phosphoenolpyruvate: step 3/7. It participates in metabolic intermediate biosynthesis; chorismate biosynthesis; chorismate from D-erythrose 4-phosphate and phosphoenolpyruvate: step 4/7. Its pathway is metabolic intermediate biosynthesis; chorismate biosynthesis; chorismate from D-erythrose 4-phosphate and phosphoenolpyruvate: step 5/7. The protein operates within metabolic intermediate biosynthesis; chorismate biosynthesis; chorismate from D-erythrose 4-phosphate and phosphoenolpyruvate: step 6/7. In terms of biological role, the AROM polypeptide catalyzes 5 consecutive enzymatic reactions in prechorismate polyaromatic amino acid biosynthesis. The sequence is that of Pentafunctional AROM polypeptide from Candida albicans (strain SC5314 / ATCC MYA-2876) (Yeast).